A 453-amino-acid polypeptide reads, in one-letter code: MKKIMEYLQHYINQYPHRLALVFEDRHLTYGELSKEIYQASMRYKEVKLNEKVGLMDDHPVNNIINYFAVHQRGGIPCIFNHQWSNERIHQLVKSYDIQWLIKDNHLTLNHDDSIYNDEVIPRNVIHIGFTSGTTGLPKAFYRNEHSWIVSFKENEKLLQHCEETIVAPGPLSHSLSLYACIYALSTGKTFIGQKNFNPLSLMRLINQLNKATAIFVVPTMVQQLISTQRHCSSIKSILSSGAKLTLQQFQQISTLYPQANLIEFFGTSEASFISYNFNQSSPAHSVGKLFPHVETRLLNQDDDAVGLLAVRSEMVFSGYVGQSNQEGSWIKTGDFAYIKNQHLFLVGRESDRIIVGGINVYPTAIESLIMDIEGIDEALVIGIPHAKFGEIAILLYSGKVQLNYRQIKSFLMKQLSRQEVPSKLKKIDHMIYTESGKIARKEMKNKFINGEL.

This sequence belongs to the ATP-dependent AMP-binding enzyme family.

This is Putative long chain fatty acid-CoA ligase VraA (vraA) from Staphylococcus epidermidis (strain ATCC 35984 / DSM 28319 / BCRC 17069 / CCUG 31568 / BM 3577 / RP62A).